The sequence spans 275 residues: Large ribosomal subunit protein uL2 (275 aa).

Disordered regions lie at residues 36 to 55 (KQSK…RHQG) and 223 to 275 (VAMN…RHKR). Over residues 39-48 (KNAGRNNSGR) the composition is skewed to polar residues. Positions 229–239 (DHPHGGGEGRT) are enriched in basic and acidic residues.

Belongs to the universal ribosomal protein uL2 family. Part of the 50S ribosomal subunit. Forms a bridge to the 30S subunit in the 70S ribosome.

Its function is as follows. One of the primary rRNA binding proteins. Required for association of the 30S and 50S subunits to form the 70S ribosome, for tRNA binding and peptide bond formation. It has been suggested to have peptidyltransferase activity; this is somewhat controversial. Makes several contacts with the 16S rRNA in the 70S ribosome. This is Large ribosomal subunit protein uL2 from Aromatoleum aromaticum (strain DSM 19018 / LMG 30748 / EbN1) (Azoarcus sp. (strain EbN1)).